The following is a 196-amino-acid chain: Large ribosomal subunit protein mL66 (196 aa).

The N-terminal 34 residues, 1 to 34 (MAALNVLVSGCGRFLRGLLTGPTVTSWARPPARG), are a transit peptide targeting the mitochondrion.

It belongs to the bacterial ribosomal protein bS18 family. Mitochondrion-specific ribosomal protein mL66 subfamily. Component of the mitochondrial ribosome small subunit (28S) which comprises a 12S rRNA and about 30 distinct proteins.

It is found in the mitochondrion. This is Large ribosomal subunit protein mL66 (MRPS18A) from Bos taurus (Bovine).